The chain runs to 262 residues: Shikimate dehydrogenase (NADP(+)) (262 aa).

Residues Ser-15–Ser-17 and Thr-62 contribute to the shikimate site. Lys-66 serves as the catalytic Proton acceptor. An NADP(+)-binding site is contributed by Glu-78. Residues Asn-87 and Asp-102 each contribute to the shikimate site. Residues Gly-126–Ala-130, Asn-150–Arg-155, and Met-214 contribute to the NADP(+) site. Position 216 (Tyr-216) interacts with shikimate. Position 236 (Gly-236) interacts with NADP(+).

It belongs to the shikimate dehydrogenase family. In terms of assembly, homodimer.

It carries out the reaction shikimate + NADP(+) = 3-dehydroshikimate + NADPH + H(+). It participates in metabolic intermediate biosynthesis; chorismate biosynthesis; chorismate from D-erythrose 4-phosphate and phosphoenolpyruvate: step 4/7. Functionally, involved in the biosynthesis of the chorismate, which leads to the biosynthesis of aromatic amino acids. Catalyzes the reversible NADPH linked reduction of 3-dehydroshikimate (DHSA) to yield shikimate (SA). The protein is Shikimate dehydrogenase (NADP(+)) of Acinetobacter baylyi (strain ATCC 33305 / BD413 / ADP1).